Consider the following 389-residue polypeptide: Galactokinase (389 aa).

Substrate is bound at residue 34–37 (EHTD). ATP-binding positions include Ser-68 and 125–131 (GSGLSSS). Residues Ser-131 and Glu-163 each coordinate Mg(2+). The active-site Proton acceptor is the Asp-175. Residue Tyr-225 coordinates substrate.

The protein belongs to the GHMP kinase family. GalK subfamily.

Its subcellular location is the cytoplasm. The catalysed reaction is alpha-D-galactose + ATP = alpha-D-galactose 1-phosphate + ADP + H(+). Its pathway is carbohydrate metabolism; galactose metabolism. Its function is as follows. Catalyzes the transfer of the gamma-phosphate of ATP to D-galactose to form alpha-D-galactose-1-phosphate (Gal-1-P). In Clostridium beijerinckii (strain ATCC 51743 / NCIMB 8052) (Clostridium acetobutylicum), this protein is Galactokinase.